We begin with the raw amino-acid sequence, 156 residues long: Arginine repressor (156 aa).

It belongs to the ArgR family.

The protein localises to the cytoplasm. Its pathway is amino-acid biosynthesis; L-arginine biosynthesis [regulation]. In terms of biological role, regulates arginine biosynthesis genes. This is Arginine repressor from Escherichia fergusonii (strain ATCC 35469 / DSM 13698 / CCUG 18766 / IAM 14443 / JCM 21226 / LMG 7866 / NBRC 102419 / NCTC 12128 / CDC 0568-73).